The sequence spans 296 residues: Elongation factor Ts (296 aa).

Positions 79–82 are involved in Mg(2+) ion dislocation from EF-Tu; that stretch reads TDFV.

Belongs to the EF-Ts family.

It localises to the cytoplasm. Its function is as follows. Associates with the EF-Tu.GDP complex and induces the exchange of GDP to GTP. It remains bound to the aminoacyl-tRNA.EF-Tu.GTP complex up to the GTP hydrolysis stage on the ribosome. The protein is Elongation factor Ts (tsf) of Spiroplasma citri.